A 210-amino-acid chain; its full sequence is Uracil phosphoribosyltransferase (210 aa).

5-phospho-alpha-D-ribose 1-diphosphate-binding positions include Arg78, Arg103, and 130 to 138; that span reads DPMLATGGS. Uracil contacts are provided by residues Ile195 and 200-202; that span reads GDA. Position 201 (Asp201) interacts with 5-phospho-alpha-D-ribose 1-diphosphate.

It belongs to the UPRTase family. Mg(2+) is required as a cofactor.

The enzyme catalyses UMP + diphosphate = 5-phospho-alpha-D-ribose 1-diphosphate + uracil. Its pathway is pyrimidine metabolism; UMP biosynthesis via salvage pathway; UMP from uracil: step 1/1. With respect to regulation, allosterically activated by GTP. In terms of biological role, catalyzes the conversion of uracil and 5-phospho-alpha-D-ribose 1-diphosphate (PRPP) to UMP and diphosphate. This Leifsonia xyli subsp. xyli (strain CTCB07) protein is Uracil phosphoribosyltransferase.